A 325-amino-acid chain; its full sequence is NADH-quinone oxidoreductase subunit H (325 aa).

Helical transmembrane passes span 11–31 (ILIS…CGAF), 81–101 (AIFT…FAIV), 114–134 (IGIL…LFAG), 154–174 (LSYE…AGSF), 186–206 (VWNV…GVAV), 237–257 (FFVG…TLFF), 265–285 (LPPF…FILI), and 304–324 (VCLP…LYNA).

Belongs to the complex I subunit 1 family. In terms of assembly, NDH-1 is composed of 13 different subunits. Subunits NuoA, H, J, K, L, M, N constitute the membrane sector of the complex.

It is found in the cell inner membrane. It catalyses the reaction a quinone + NADH + 5 H(+)(in) = a quinol + NAD(+) + 4 H(+)(out). Functionally, NDH-1 shuttles electrons from NADH, via FMN and iron-sulfur (Fe-S) centers, to quinones in the respiratory chain. The immediate electron acceptor for the enzyme in this species is believed to be ubiquinone. Couples the redox reaction to proton translocation (for every two electrons transferred, four hydrogen ions are translocated across the cytoplasmic membrane), and thus conserves the redox energy in a proton gradient. This subunit may bind ubiquinone. This Yersinia enterocolitica serotype O:8 / biotype 1B (strain NCTC 13174 / 8081) protein is NADH-quinone oxidoreductase subunit H.